The chain runs to 281 residues: CDAN1-interacting nuclease 1 (281 aa).

The protein resides in the nucleus. Its subcellular location is the cytoplasm. Its function is as follows. Plays a role in erythroid cell differentiation. In Bos taurus (Bovine), this protein is CDAN1-interacting nuclease 1 (CDIN1).